The chain runs to 147 residues: Large ribosomal subunit protein uL13 (147 aa).

It belongs to the universal ribosomal protein uL13 family. Part of the 50S ribosomal subunit.

This protein is one of the early assembly proteins of the 50S ribosomal subunit, although it is not seen to bind rRNA by itself. It is important during the early stages of 50S assembly. This Corynebacterium glutamicum (strain R) protein is Large ribosomal subunit protein uL13.